Here is a 118-residue protein sequence, read N- to C-terminus: Non-specific lipid-transfer protein (118 aa).

An N-terminal signal peptide occupies residues 1–27 (MGVSKVAIAVAVMLMVVVINHPAVVEG). Cystine bridges form between Cys30–Cys75, Cys40–Cys54, Cys55–Cys100, and Cys77–Cys114.

It belongs to the plant LTP family. Post-translationally, disulfide bonds.

Plant non-specific lipid-transfer proteins transfer phospholipids as well as galactolipids across membranes. May play a role in wax or cutin deposition in the cell walls of expanding epidermal cells and certain secretory tissues. The polypeptide is Non-specific lipid-transfer protein (Apium graveolens (Celery)).